The following is a 187-amino-acid chain: dCTP deaminase, dUMP-forming (187 aa).

DCTP is bound by residues 101-106 (KSSLGR) and aspartate 119. Glutamate 129 (proton donor/acceptor) is an active-site residue. DCTP-binding residues include glutamine 148, tyrosine 162, and glutamine 174.

The protein belongs to the dCTP deaminase family. As to quaternary structure, homotrimer.

The enzyme catalyses dCTP + 2 H2O = dUMP + NH4(+) + diphosphate. Its pathway is pyrimidine metabolism; dUMP biosynthesis; dUMP from dCTP: step 1/1. Functionally, bifunctional enzyme that catalyzes both the deamination of dCTP to dUTP and the hydrolysis of dUTP to dUMP without releasing the toxic dUTP intermediate. The protein is dCTP deaminase, dUMP-forming of Corynebacterium kroppenstedtii (strain DSM 44385 / JCM 11950 / CIP 105744 / CCUG 35717).